We begin with the raw amino-acid sequence, 1342 residues long: DNA-directed RNA polymerase subunit beta (1342 aa).

Belongs to the RNA polymerase beta chain family. In terms of assembly, the RNAP catalytic core consists of 2 alpha, 1 beta, 1 beta' and 1 omega subunit. When a sigma factor is associated with the core the holoenzyme is formed, which can initiate transcription.

The catalysed reaction is RNA(n) + a ribonucleoside 5'-triphosphate = RNA(n+1) + diphosphate. DNA-dependent RNA polymerase catalyzes the transcription of DNA into RNA using the four ribonucleoside triphosphates as substrates. This is DNA-directed RNA polymerase subunit beta from Proteus mirabilis (strain HI4320).